A 387-amino-acid polypeptide reads, in one-letter code: Alpha-maltose-1-phosphate synthase (387 aa).

This sequence belongs to the glycosyltransferase group 1 family.

The catalysed reaction is ADP-alpha-D-glucose + alpha-D-glucose 1-phosphate = alpha-maltose 1-phosphate + ADP + H(+). It functions in the pathway capsule biogenesis; capsule polysaccharide biosynthesis. The protein operates within glycan biosynthesis; glycogen biosynthesis. In terms of biological role, involved in the biosynthesis of the maltose-1-phosphate (M1P) building block required for alpha-glucan production by the key enzyme GlgE. Catalyzes the formation of an alpha-1,4 linkage between glucose from ADP-glucose and glucose 1-phosphate (G1P) to yield maltose-1-phosphate (M1P). The protein is Alpha-maltose-1-phosphate synthase of Mycobacterium tuberculosis (strain CDC 1551 / Oshkosh).